The following is a 49-amino-acid chain: Large ribosomal subunit protein bL33 (49 aa).

This sequence belongs to the bacterial ribosomal protein bL33 family.

This chain is Large ribosomal subunit protein bL33, found in Clostridium botulinum (strain ATCC 19397 / Type A).